The chain runs to 406 residues: Histidine--tRNA ligase (406 aa).

Belongs to the class-II aminoacyl-tRNA synthetase family. As to quaternary structure, homodimer.

The protein resides in the cytoplasm. It carries out the reaction tRNA(His) + L-histidine + ATP = L-histidyl-tRNA(His) + AMP + diphosphate + H(+). The protein is Histidine--tRNA ligase of Nitratiruptor sp. (strain SB155-2).